A 422-amino-acid chain; its full sequence is Histidine--tRNA ligase (422 aa).

Belongs to the class-II aminoacyl-tRNA synthetase family. In terms of assembly, homodimer.

The protein localises to the cytoplasm. It catalyses the reaction tRNA(His) + L-histidine + ATP = L-histidyl-tRNA(His) + AMP + diphosphate + H(+). This Photobacterium profundum (strain SS9) protein is Histidine--tRNA ligase (hisS).